Consider the following 254-residue polypeptide: 3-deoxy-manno-octulosonate cytidylyltransferase (254 aa).

This sequence belongs to the KdsB family.

The protein resides in the cytoplasm. It carries out the reaction 3-deoxy-alpha-D-manno-oct-2-ulosonate + CTP = CMP-3-deoxy-beta-D-manno-octulosonate + diphosphate. It functions in the pathway nucleotide-sugar biosynthesis; CMP-3-deoxy-D-manno-octulosonate biosynthesis; CMP-3-deoxy-D-manno-octulosonate from 3-deoxy-D-manno-octulosonate and CTP: step 1/1. It participates in bacterial outer membrane biogenesis; lipopolysaccharide biosynthesis. Its function is as follows. Activates KDO (a required 8-carbon sugar) for incorporation into bacterial lipopolysaccharide in Gram-negative bacteria. The polypeptide is 3-deoxy-manno-octulosonate cytidylyltransferase (Chlamydia trachomatis serovar A (strain ATCC VR-571B / DSM 19440 / HAR-13)).